An 84-amino-acid chain; its full sequence is uncharacterized protein (84 aa).

This is an uncharacterized protein from Bos taurus (Bovine).